Here is a 944-residue protein sequence, read N- to C-terminus: Protein phosphatase 1 regulatory subunit 37 homolog (944 aa).

The interval 42-71 is disordered; the sequence is QQQSHSAATSVRKKTCQDANSSGEDPNGRI. 5 LRR repeats span residues 203 to 224, 232 to 255, 262 to 282, 290 to 311, and 318 to 338; these read SCVR…TTIF, SLQM…CKMA, SLTC…LVLI, GLRE…HIYQ, and SLQL…RHIC. The interval 517-598 is disordered; sequence EEGDSGVEKK…KERHQRFVRS (82 aa). Residues 522–542 show a composition bias toward basic and acidic residues; it reads GVEKKDGNECEGEDNKDRQDT. 2 stretches are compositionally biased toward polar residues: residues 543 to 554 and 567 to 585; these read PAETENGVSSNE and PESN…STSK. Positions 586-595 are enriched in basic residues; that stretch reads LSRKERHQRF.

Belongs to the PPP1R37 family.

In Caenorhabditis elegans, this protein is Protein phosphatase 1 regulatory subunit 37 homolog.